Consider the following 364-residue polypeptide: Dual-specificity RNA methyltransferase RlmN (364 aa).

Residue glutamate 91 is the Proton acceptor of the active site. In terms of domain architecture, Radical SAM core spans 97 to 333; the sequence is EDDRGTLCIS…TTTRKTRGDD (237 aa). A disulfide bridge links cysteine 104 with cysteine 338. [4Fe-4S] cluster-binding residues include cysteine 111, cysteine 115, and cysteine 118. S-adenosyl-L-methionine is bound by residues 164 to 165, serine 196, 218 to 220, and asparagine 295; these read GE and SLH. The active-site S-methylcysteine intermediate is the cysteine 338.

The protein belongs to the radical SAM superfamily. RlmN family. Requires [4Fe-4S] cluster as cofactor.

It is found in the cytoplasm. The enzyme catalyses adenosine(2503) in 23S rRNA + 2 reduced [2Fe-2S]-[ferredoxin] + 2 S-adenosyl-L-methionine = 2-methyladenosine(2503) in 23S rRNA + 5'-deoxyadenosine + L-methionine + 2 oxidized [2Fe-2S]-[ferredoxin] + S-adenosyl-L-homocysteine. The catalysed reaction is adenosine(37) in tRNA + 2 reduced [2Fe-2S]-[ferredoxin] + 2 S-adenosyl-L-methionine = 2-methyladenosine(37) in tRNA + 5'-deoxyadenosine + L-methionine + 2 oxidized [2Fe-2S]-[ferredoxin] + S-adenosyl-L-homocysteine. Its function is as follows. Specifically methylates position 2 of adenine 2503 in 23S rRNA and position 2 of adenine 37 in tRNAs. m2A2503 modification seems to play a crucial role in the proofreading step occurring at the peptidyl transferase center and thus would serve to optimize ribosomal fidelity. The polypeptide is Dual-specificity RNA methyltransferase RlmN (Dechloromonas aromatica (strain RCB)).